We begin with the raw amino-acid sequence, 519 residues long: Circadian clock oscillator protein KaiC 1 (519 aa).

KaiC domains follow at residues 1–248 and 262–519; these read MNLP…INIF and ARIS…KTAE. ATP is bound by residues Gly-50, Thr-51, Gly-52, Lys-53, Thr-54, Leu-55, Ser-90, Lys-225, Leu-226, Arg-227, Thr-229, His-231, Thr-241, Thr-291, Gly-292, Thr-293, Gly-294, Lys-295, Thr-296, and Leu-297. Residue Thr-54 coordinates Mg(2+). Thr-296 provides a ligand contact to Mg(2+). Glu-319 contributes to the Mg(2+) binding site. Trp-332 provides a ligand contact to ATP. Ser-432 carries the post-translational modification Phosphoserine; by autocatalysis. Thr-433 carries the post-translational modification Phosphothreonine; by autocatalysis. Residues Arg-452, Lys-458, Met-459, Arg-460, Ser-462, His-464, and Lys-466 each contribute to the ATP site.

Belongs to the KaiC family. Homohexamer; hexamerization is dependent on ATP-binding. Core component of the KaiABC complex, at least composed of a KaiC homohexamer, a KaiB dimer and two KaiA dimers. Interacts directly with SasA. Multimerizes, probably forming homohexamers, no interaction with KaiC2 or KaiC3 is seen. Interacts with KaiA. In another study interacts with itself, KaiB1, KaiB3 and KaiC3. Interacts with SasA (hik8). Mg(2+) serves as cofactor. Post-translationally, phosphorylated on serine and threonine residues by autocatalysis. Has a 4 step phosphorylation cycle; the autokinase acts first on Thr-433, then Ser-432. When Ser-432 is modified KaiC switches to an autophosphatase mode, acting first on phospho-Thr-433 then phospho-Ser-432.

The enzyme catalyses L-seryl-[protein] + ATP = O-phospho-L-seryl-[protein] + ADP + H(+). The catalysed reaction is L-threonyl-[protein] + ATP = O-phospho-L-threonyl-[protein] + ADP + H(+). It carries out the reaction ATP + H2O = ADP + phosphate + H(+). With respect to regulation, the interaction with KaiA enhances its phosphorylation status, while the interaction with KaiB decreases it. Component of the oscillator and circadian clock in this organism, enhances fitness in a rhythmic environment. Autophosphorylates in the presence of KaiA, no activity is seen in its absence. Its function is as follows. Central component of the KaiABC oscillator complex, which constitutes the main circadian regulator in cyanobacteria. Complex composition changes during the circadian cycle to control KaiC phosphorylation. KaiA stimulates KaiC autophosphorylation, while KaiB sequesters KaiA, leading to KaiC autodephosphorylation. Clock output pathways impact the RpaA transcriptional regulator. KaiC enhances the autophosphorylation activity of SasA, which then transfers its phosphate group to RpaA to activate it. KaiB and KaiC together enhance the phospho-RpaA dephosphatase activity of CikA. In terms of biological role, has a weak, temperature-independent ATPase activity; ATPase activity defines the circadian period. The phosphorylation state of KaiC modulates its ATPase activity and effects KaiB binding. This is Circadian clock oscillator protein KaiC 1 from Synechocystis sp. (strain ATCC 27184 / PCC 6803 / Kazusa).